The sequence spans 498 residues: ATP synthase subunit beta, chloroplastic (498 aa).

Position 172–179 (glycine 172–threonine 179) interacts with ATP.

Belongs to the ATPase alpha/beta chains family. F-type ATPases have 2 components, CF(1) - the catalytic core - and CF(0) - the membrane proton channel. CF(1) has five subunits: alpha(3), beta(3), gamma(1), delta(1), epsilon(1). CF(0) has four main subunits: a(1), b(1), b'(1) and c(9-12).

The protein resides in the plastid. It is found in the chloroplast thylakoid membrane. The enzyme catalyses ATP + H2O + 4 H(+)(in) = ADP + phosphate + 5 H(+)(out). Functionally, produces ATP from ADP in the presence of a proton gradient across the membrane. The catalytic sites are hosted primarily by the beta subunits. The sequence is that of ATP synthase subunit beta, chloroplastic from Montinia caryophyllacea (Wild clove bush).